Consider the following 441-residue polypeptide: Tol-Pal system protein TolB (441 aa).

The first 23 residues, 1–23 (MRNAIATVLLGLAMLLPVGAVQA), serve as a signal peptide directing secretion. The disordered stretch occupies residues 420–441 (RNLKPVKTPDGASDPSWSPLQN).

This sequence belongs to the TolB family. As to quaternary structure, the Tol-Pal system is composed of five core proteins: the inner membrane proteins TolA, TolQ and TolR, the periplasmic protein TolB and the outer membrane protein Pal. They form a network linking the inner and outer membranes and the peptidoglycan layer.

Its subcellular location is the periplasm. Its function is as follows. Part of the Tol-Pal system, which plays a role in outer membrane invagination during cell division and is important for maintaining outer membrane integrity. The protein is Tol-Pal system protein TolB of Ruegeria sp. (strain TM1040) (Silicibacter sp.).